Here is a 665-residue protein sequence, read N- to C-terminus: Dual specificity protein phosphatase 16 (665 aa).

Residues 22–137 enclose the Rhodanese domain; the sequence is GTEKVLLIDS…FSRCFPGLCE (116 aa). Lys-55 carries the (Microbial infection) N6-acetyllysine; by EIS modification. Residues 158 to 300 enclose the Tyrosine-protein phosphatase domain; sequence GPTRILPNLY…LLDYEKKIKN (143 aa). Cys-244 acts as the Phosphocysteine intermediate in catalysis. The disordered stretch occupies residues 321-368; the sequence is EPVPAVSEGGQKSETPLSPPCADSATSEAAGQRPVHPASVPSVPSVQP. A compositionally biased stretch (low complexity) spans 354-368; the sequence is PVHPASVPSVPSVQP. Residue Ser-446 is modified to Phosphoserine; by MAPK1. Polar residues-rich tracts occupy residues 449–458 and 487–499; these read QELSEQTPET and VRTS…QRSL. 2 disordered regions span residues 449-505 and 597-665; these read QELS…PLHR and VRRR…IEVS. Ser-501 bears the Phosphoserine mark. Over residues 602-622 the composition is skewed to basic and acidic residues; sequence KPSDRADSRRSWHEESPFEKQ.

It belongs to the protein-tyrosine phosphatase family. Non-receptor class dual specificity subfamily. Interacts with ARRB2. Post-translationally, phosphorylated at Ser-446 by MAPK1/ERK2, which prevents its degradation, and thereby stabilizes it and blocks JNK MAPK activity. In terms of processing, (Microbial infection) Acetylated at Lys-55 by the M.tuberculosis Eis protein; this leads to the inhibition of JNK-dependent autophagy, phagosome maturation, and ROS (reactive oxygen species) generation for enhanced intracellular survival of M.tuberculosis.

The protein resides in the cytoplasm. It is found in the nucleus. It localises to the cytoplasmic vesicle. It carries out the reaction O-phospho-L-tyrosyl-[protein] + H2O = L-tyrosyl-[protein] + phosphate. The catalysed reaction is O-phospho-L-seryl-[protein] + H2O = L-seryl-[protein] + phosphate. It catalyses the reaction O-phospho-L-threonyl-[protein] + H2O = L-threonyl-[protein] + phosphate. Functionally, dual specificity protein phosphatase involved in the inactivation of MAP kinases. Dephosphorylates MAPK10 bound to ARRB2. This is Dual specificity protein phosphatase 16 (DUSP16) from Homo sapiens (Human).